Reading from the N-terminus, the 503-residue chain is Glucosaminyl-phosphatidylinositol-acyltransferase PIGW (503 aa).

Residues 1–21 lie on the Lumenal side of the membrane; it reads MSQKQMKEAFVSNQNGTSVLE. An N-linked (GlcNAc...) asparagine glycan is attached at N15. The helical transmembrane segment at 22–42 threads the bilayer; sequence ITEGLCLPALCILCRGLLIIL. The Cytoplasmic segment spans residues 43–56; it reads SQQLCSSLHNSRTR. The chain crosses the membrane as a helical span at residues 57 to 75; the sequence is FLVDFAFLIVPLVTTLTIF. Residues 76–78 are Lumenal-facing; it reads SSF. Residues 79–98 traverse the membrane as a helical segment; sequence VLLEYLVAIILGAGLLYEIY. Over 99-131 the chain is Cytoplasmic; the sequence is CRRTCYARMPFQKICEKFLKVSLESEHIPAISC. A helical transmembrane segment spans residues 132 to 152; it reads FRVVNSAFTAVAILAVDFPLF. The Lumenal segment spans residues 153-160; sequence PRRYAKTE. Residues 161 to 181 form a helical membrane-spanning segment; the sequence is LYGTGAMDYGVGGFIFGSAMV. The Cytoplasmic portion of the chain corresponds to 182–201; that stretch reads SPEVRRKYTKGSRFCYLTKS. The helical transmembrane segment at 202–222 threads the bilayer; sequence LYSLWPLVFLGVGRLVAIKSV. The Lumenal portion of the chain corresponds to 223–236; that stretch reads DYQEHLTEYGVHWN. The chain crosses the membrane as a helical span at residues 237–257; sequence FFFTLIAVKLITSLLLLICPL. Over 258-259 the chain is Cytoplasmic; that stretch reads NR. Residues 260 to 280 traverse the membrane as a helical segment; that stretch reads SWVVAISIAALYQLALDFTPL. Over 281–304 the chain is Lumenal; it reads KSLILYGTDGSGTRVGLLNANREG. The helical transmembrane segment at 305 to 325 threads the bilayer; the sequence is IISVLGYVAVHMAGVQTGLYV. The Cytoplasmic portion of the chain corresponds to 326-337; sequence LKKRSHIKDWIK. A helical transmembrane segment spans residues 338–358; that stretch reads VACCILLTAIGLFISLYIVQV. Residues 359–369 are Lumenal-facing; it reads NVEVASRRMAN. The helical transmembrane segment at 370–390 threads the bilayer; it reads LAFCIWIVASCLILLSSLLLG. Over 391-447 the chain is Cytoplasmic; the sequence is DIILSFAKFVIKEAAVPCSWKLIQSPTANKKHLESIVFDAKRKEPTLCLITAMNRNQ. S415 bears the Phosphoserine mark. Residues 448–468 form a helical membrane-spanning segment; that stretch reads LLFFLLSNVTTGLVNLSIDTL. Topologically, residues 469–472 are lumenal; that stretch reads HSST. Residues 473-493 form a helical membrane-spanning segment; sequence PWALCLLNLYMFTNCLIIYVL. Over 494–503 the chain is Cytoplasmic; that stretch reads HLQDKTIKFW.

It belongs to the PIGW family.

Its subcellular location is the endoplasmic reticulum membrane. The protein operates within glycolipid biosynthesis; glycosylphosphatidylinositol-anchor biosynthesis. Acyltransferase that catalyzes the acyl transfer from an acyl-CoA at the 2-OH position of the inositol ring of glucosaminyl phosphatidylinositol (GlcN-PI) to generate glucosaminyl acyl phosphatidylinositol (GlcN-(acyl)PI) and participates in the fourth step of GPI-anchor biosynthesis. Required for the transport of GPI-anchored proteins to the plasma membrane. Acetylation during GPI-anchor biosynthesis is not essential for the subsequent mannosylation and is usually removed soon after the attachment of GPIs to proteins. The sequence is that of Glucosaminyl-phosphatidylinositol-acyltransferase PIGW from Bos taurus (Bovine).